The primary structure comprises 264 residues: Thymidylate synthase (264 aa).

Residues arginine 21 and 126 to 127 contribute to the dUMP site; that span reads RR. The Nucleophile role is filled by cysteine 146. Residues 166 to 169, asparagine 177, and 207 to 209 contribute to the dUMP site; these read RSAD and HLY. Aspartate 169 contributes to the (6R)-5,10-methylene-5,6,7,8-tetrahydrofolate binding site. Alanine 263 lines the (6R)-5,10-methylene-5,6,7,8-tetrahydrofolate pocket.

The protein belongs to the thymidylate synthase family. Bacterial-type ThyA subfamily. Homodimer.

Its subcellular location is the cytoplasm. The catalysed reaction is dUMP + (6R)-5,10-methylene-5,6,7,8-tetrahydrofolate = 7,8-dihydrofolate + dTMP. It functions in the pathway pyrimidine metabolism; dTTP biosynthesis. Functionally, catalyzes the reductive methylation of 2'-deoxyuridine-5'-monophosphate (dUMP) to 2'-deoxythymidine-5'-monophosphate (dTMP) while utilizing 5,10-methylenetetrahydrofolate (mTHF) as the methyl donor and reductant in the reaction, yielding dihydrofolate (DHF) as a by-product. This enzymatic reaction provides an intracellular de novo source of dTMP, an essential precursor for DNA biosynthesis. In Rhodopseudomonas palustris (strain ATCC BAA-98 / CGA009), this protein is Thymidylate synthase.